Consider the following 201-residue polypeptide: ATP-dependent Clp protease proteolytic subunit (201 aa).

Residue serine 101 is the Nucleophile of the active site. Histidine 126 is a catalytic residue.

The protein belongs to the peptidase S14 family. In terms of assembly, fourteen ClpP subunits assemble into 2 heptameric rings which stack back to back to give a disk-like structure with a central cavity, resembling the structure of eukaryotic proteasomes.

The protein localises to the cytoplasm. The enzyme catalyses Hydrolysis of proteins to small peptides in the presence of ATP and magnesium. alpha-casein is the usual test substrate. In the absence of ATP, only oligopeptides shorter than five residues are hydrolyzed (such as succinyl-Leu-Tyr-|-NHMec, and Leu-Tyr-Leu-|-Tyr-Trp, in which cleavage of the -Tyr-|-Leu- and -Tyr-|-Trp bonds also occurs).. Its function is as follows. Cleaves peptides in various proteins in a process that requires ATP hydrolysis. Has a chymotrypsin-like activity. Plays a major role in the degradation of misfolded proteins. The sequence is that of ATP-dependent Clp protease proteolytic subunit from Francisella tularensis subsp. tularensis (strain FSC 198).